Reading from the N-terminus, the 142-residue chain is MVLSDADKTHVKAIWGKVGGHAGAYAAEALARTFLSFPTTKTYFPHFDLSPGSAQIQGHGKKVADALSQAVAHLDDLPGTLSKLSDLHAHKLRVDPVNFKLLSHCLIVTLAAHLSKDLTPEVHASMDKFFASVATVLTSKYR.

Residues 2 to 142 (VLSDADKTHV…VATVLTSKYR (141 aa)) form the Globin domain. The residue at position 4 (Ser-4) is a Phosphoserine. An N6-succinyllysine modification is found at Lys-8. Thr-9 is subject to Phosphothreonine. Lys-12 bears the N6-succinyllysine mark. Position 17 is an N6-acetyllysine; alternate (Lys-17). Position 17 is an N6-succinyllysine; alternate (Lys-17). At Tyr-25 the chain carries Phosphotyrosine. Position 36 is a phosphoserine (Ser-36). Lys-41 bears the N6-succinyllysine mark. Ser-50 is subject to Phosphoserine. His-59 is a binding site for O2. His-88 is a binding site for heme b. Ser-103 bears the Phosphoserine mark. The residue at position 109 (Thr-109) is a Phosphothreonine. A phosphoserine mark is found at Ser-125 and Ser-132. 2 positions are modified to phosphothreonine: Thr-135 and Thr-138. Ser-139 is modified (phosphoserine).

It belongs to the globin family. Heterotetramer of two alpha chains and two beta chains. As to expression, red blood cells.

Involved in oxygen transport from the lung to the various peripheral tissues. Functionally, hemopressin acts as an antagonist peptide of the cannabinoid receptor CNR1. Hemopressin-binding efficiently blocks cannabinoid receptor CNR1 and subsequent signaling. The sequence is that of Hemoglobin subunit alpha (HBA) from Dasyurus viverrinus (Eastern quoll).